The sequence spans 184 residues: Muscle-specific protein 20 (184 aa).

The 106-residue stretch at 17–122 (PEMDKEAQEW…NTIFALGRAT (106 aa)) folds into the Calponin-homology (CH) domain. One copy of the Calponin-like repeat lies at 157-181 (VGLQAGSNKGATQAGQNLGAGRKIL).

Belongs to the calponin family. Found in synchronous muscle; not found in asynchronous indirect flight muscle.

The sequence is that of Muscle-specific protein 20 (Mp20) from Drosophila melanogaster (Fruit fly).